The following is a 152-amino-acid chain: Single-stranded DNA-binding protein, mitochondrial (152 aa).

The transit peptide at 1–16 (MFRRPVLQVFRQFVRH) directs the protein to the mitochondrion. Positions 30-141 (LNRVQLLGRV…IIAGKKLVVH (112 aa)) constitute an SSB domain. Phosphoserine is present on residues S67 and S79. At K113 the chain carries N6-acetyllysine. Residue K122 is modified to N6-succinyllysine.

Homotetramer. Interacts with MPG/AAG, through inhibition of its glycosylase activity it potentially prevents formation of DNA breaks in ssDNA, ensuring that base removal primarily occurs in dsDNA. Interacts with POLDIP2. Interacts with PRIMPOL. Expressed in all the layers of the retina (at protein level).

The protein localises to the mitochondrion. Its subcellular location is the mitochondrion matrix. It localises to the mitochondrion nucleoid. Binds preferentially and cooperatively to pyrimidine rich single-stranded DNA (ss-DNA). In vitro, required to maintain the copy number of mitochondrial DNA (mtDNA) and plays a crucial role during mtDNA replication by stimulating the activity of the replisome components POLG and TWNK at the replication fork. Promotes the activity of the gamma complex polymerase POLG, largely by organizing the template DNA and eliminating secondary structures to favor ss-DNA conformations that facilitate POLG activity. In addition it is able to promote the 5'-3' unwinding activity of the mtDNA helicase TWNK. May also function in mtDNA repair. The polypeptide is Single-stranded DNA-binding protein, mitochondrial (Ssbp1) (Mus musculus (Mouse)).